Here is a 257-residue protein sequence, read N- to C-terminus: Small ribosomal subunit protein uS4c (257 aa).

2 consecutive S4 RNA-binding domains span residues methionine 110–asparagine 170 and lysine 189–leucine 255.

It belongs to the universal ribosomal protein uS4 family. As to quaternary structure, part of the 30S ribosomal subunit. Contacts protein S5. The interaction surface between S4 and S5 is involved in control of translational fidelity.

Its subcellular location is the plastid. The protein resides in the chloroplast. Functionally, one of the primary rRNA binding proteins, it binds directly to 16S rRNA where it nucleates assembly of the body of the 30S subunit. Its function is as follows. With S5 and S12 plays an important role in translational accuracy. This Chlamydomonas reinhardtii (Chlamydomonas smithii) protein is Small ribosomal subunit protein uS4c (rps4).